A 126-amino-acid chain; its full sequence is uncharacterized protein (126 aa).

This is an uncharacterized protein from Columba livia (Rock dove).